A 245-amino-acid chain; its full sequence is Membrane-spanning 4-domains subfamily A member 15 (245 aa).

Positions 1-30 (MWERRGRGESAAGTAAVASRNASGLRPPPA) are disordered. Transmembrane regions (helical) follow at residues 78-98 (GTVQ…LLMV), 103-123 (LGML…FIIS), 147-167 (ILSA…FGVT), and 176-196 (LAVL…ATHF).

This sequence belongs to the MS4A family.

It is found in the membrane. May be involved in signal transduction as a component of a multimeric receptor complex. This chain is Membrane-spanning 4-domains subfamily A member 15 (Ms4a15), found in Mus musculus (Mouse).